Here is a 74-residue protein sequence, read N- to C-terminus: Large ribosomal subunit protein bL31 (74 aa).

Residues C16, C18, C37, and C40 each contribute to the Zn(2+) site.

Belongs to the bacterial ribosomal protein bL31 family. Type A subfamily. Part of the 50S ribosomal subunit. It depends on Zn(2+) as a cofactor.

Functionally, binds the 23S rRNA. The polypeptide is Large ribosomal subunit protein bL31 (Koribacter versatilis (strain Ellin345)).